A 74-amino-acid polypeptide reads, in one-letter code: Conotoxin ca17a (74 aa).

A signal peptide spans 1–20 (MQKATVLLLALLLLLPLSTA). Residues 21 to 40 (QDAEGSQEDAAQREVDIATR) constitute a propeptide that is removed on maturation. Proline 51 carries the 4-hydroxyproline modification.

Post-translationally, contains disulfide bonds. As to expression, expressed by the venom gland.

It is found in the secreted. In Conus caracteristicus (Characteristic cone), this protein is Conotoxin ca17a.